Consider the following 348-residue polypeptide: Chlorophyll(ide) b reductase NOL, chloroplastic (348 aa).

A chloroplast-targeting transit peptide spans 1–61; that stretch reads MATWSGFNVS…TRQNLTVTPS (61 aa). NAD(+) is bound at residue 84–108; the sequence is ITGSTKGIGYALAREFLKAGDNVVI. Y233 serves as the catalytic Proton acceptor.

This sequence belongs to the short-chain dehydrogenases/reductases (SDR) family. Interacts with NCY1 to form a complex that acts as a chlorophyll b reductase. Interacts with HCAR, RCCR and the LHCII complex. Part of a SGR1-CCE-LHCII complex, which acts in chlorophyll breakdown.

It localises to the plastid. The protein localises to the chloroplast thylakoid membrane. The catalysed reaction is 7(1)-hydroxychlorophyllide a + NAD(+) = chlorophyllide b + NADH + H(+). The enzyme catalyses 7(1)-hydroxychlorophyllide a + NADP(+) = chlorophyllide b + NADPH + H(+). Functionally, required for chlorophyll b degradation. Chlorophyll b, chlorophyllide b, pheophorbide b and pheophytin b can be used as substrates. Belongs to the chlorophyll catabolic enzymes (CCEs). In Arabidopsis thaliana (Mouse-ear cress), this protein is Chlorophyll(ide) b reductase NOL, chloroplastic (NOL).